The chain runs to 362 residues: Bifunctional chorismate mutase/prephenate dehydratase (362 aa).

The Chorismate mutase domain maps to 1–92; that stretch reads MEELKELRKE…ACLSLEKKIK (92 aa). Arginine 8, arginine 25, lysine 36, and glutamate 49 together coordinate substrate. Residues 93–267 enclose the Prephenate dehydratase domain; sequence VAYLGPKATF…NFTRFLVIAK (175 aa). Residues 279–356 enclose the ACT domain; the sequence is SILFGVKDEP…QFLKVLGSYP (78 aa).

The protein resides in the cytoplasm. The catalysed reaction is chorismate = prephenate. The enzyme catalyses prephenate + H(+) = 3-phenylpyruvate + CO2 + H2O. It participates in amino-acid biosynthesis; L-phenylalanine biosynthesis; phenylpyruvate from prephenate: step 1/1. It functions in the pathway metabolic intermediate biosynthesis; prephenate biosynthesis; prephenate from chorismate: step 1/1. In terms of biological role, catalyzes the Claisen rearrangement of chorismate to prephenate and the decarboxylation/dehydration of prephenate to phenylpyruvate. The chain is Bifunctional chorismate mutase/prephenate dehydratase (pheA) from Aquifex aeolicus (strain VF5).